The following is a 647-amino-acid chain: DNA mismatch repair protein MutL (647 aa).

Residues 387 to 400 show a composition bias toward basic and acidic residues; the sequence is SAKPVHEATDEKAE. Positions 387–412 are disordered; sequence SAKPVHEATDEKAEPQSTSVKFAERK.

It belongs to the DNA mismatch repair MutL/HexB family.

Its function is as follows. This protein is involved in the repair of mismatches in DNA. It is required for dam-dependent methyl-directed DNA mismatch repair. May act as a 'molecular matchmaker', a protein that promotes the formation of a stable complex between two or more DNA-binding proteins in an ATP-dependent manner without itself being part of a final effector complex. The polypeptide is DNA mismatch repair protein MutL (Streptococcus sanguinis (strain SK36)).